Here is a 321-residue protein sequence, read N- to C-terminus: Auxin-responsive protein IAA8 (321 aa).

The EAR-like (transcriptional repression) signature appears at 54-58; the sequence is LRLGL. The PB1 domain occupies 199–301; the sequence is VLFVKVSMDG…TCQKLKIMKG (103 aa).

It belongs to the Aux/IAA family. Homodimers and heterodimers. Interacts with TPL. In terms of tissue distribution, highly expressed in the whole plant.

The protein resides in the nucleus. In terms of biological role, aux/IAA proteins are short-lived transcriptional factors that function as repressors of early auxin response genes at low auxin concentrations. Repression is thought to result from the interaction with auxin response factors (ARFs), proteins that bind to the auxin-responsive promoter element (AuxRE). Formation of heterodimers with ARF proteins may alter their ability to modulate early auxin response genes expression. This chain is Auxin-responsive protein IAA8 (IAA8), found in Arabidopsis thaliana (Mouse-ear cress).